The sequence spans 237 residues: Ribonuclease PH (237 aa).

Phosphate contacts are provided by residues arginine 86 and 124–126; that span reads GTR.

This sequence belongs to the RNase PH family. Homohexameric ring arranged as a trimer of dimers.

It carries out the reaction tRNA(n+1) + phosphate = tRNA(n) + a ribonucleoside 5'-diphosphate. Phosphorolytic 3'-5' exoribonuclease that plays an important role in tRNA 3'-end maturation. Removes nucleotide residues following the 3'-CCA terminus of tRNAs; can also add nucleotides to the ends of RNA molecules by using nucleoside diphosphates as substrates, but this may not be physiologically important. Probably plays a role in initiation of 16S rRNA degradation (leading to ribosome degradation) during starvation. The protein is Ribonuclease PH of Rhodopseudomonas palustris (strain HaA2).